The primary structure comprises 710 residues: Assimilatory nitrate reductase catalytic subunit (710 aa).

Residues 19–77 form the 4Fe-4S Mo/W bis-MGD-type domain; sequence EKTYDTQCPFCSMQCKMQLVEQTIVTRKKYTAIGIDNPTTQGRLCIKGMNAHQHALNSS. Residues cysteine 26, cysteine 29, cysteine 33, and cysteine 63 each coordinate [4Fe-4S] cluster.

Belongs to the prokaryotic molybdopterin-containing oxidoreductase family. [4Fe-4S] cluster is required as a cofactor. The cofactor is Mo-bis(molybdopterin guanine dinucleotide).

The protein operates within nitrogen metabolism; nitrate reduction (denitrification); dinitrogen from nitrate: step 1/4. Nitrate reductase is a key enzyme involved in the first step of nitrate assimilation in plants, fungi and bacteria. The protein is Assimilatory nitrate reductase catalytic subunit (nasC) of Bacillus subtilis (strain 168).